The primary structure comprises 124 residues: Small ribosomal subunit protein uS12 (124 aa).

Position 89 is a 3-methylthioaspartic acid (Asp89). A disordered region spans residues 102–124 (LDTSGVNNRKHGRSKYGTKRPKS). The span at 109 to 124 (NRKHGRSKYGTKRPKS) shows a compositional bias: basic residues.

Belongs to the universal ribosomal protein uS12 family. As to quaternary structure, part of the 30S ribosomal subunit. Contacts proteins S8 and S17. May interact with IF1 in the 30S initiation complex.

Functionally, with S4 and S5 plays an important role in translational accuracy. Its function is as follows. Interacts with and stabilizes bases of the 16S rRNA that are involved in tRNA selection in the A site and with the mRNA backbone. Located at the interface of the 30S and 50S subunits, it traverses the body of the 30S subunit contacting proteins on the other side and probably holding the rRNA structure together. The combined cluster of proteins S8, S12 and S17 appears to hold together the shoulder and platform of the 30S subunit. This Francisella tularensis subsp. novicida (strain U112) protein is Small ribosomal subunit protein uS12.